The primary structure comprises 704 residues: Glycogen [starch] synthase, liver (704 aa).

Position 8 is a phosphoserine; by AMPK and PKA (Ser-8). Ser-11 carries the post-translational modification Phosphoserine. A UDP-binding site is contributed by Lys-40. UDP-alpha-D-glucose-binding residues include His-205 and Arg-211. Positions 291, 292, 294, 297, and 301 each coordinate alpha-D-glucose 6-phosphate. Arg-331 lines the UDP pocket. Position 331 (Arg-331) interacts with UDP-alpha-D-glucose. His-501 provides a ligand contact to alpha-D-glucose 6-phosphate. Residues Glu-510, Trp-512, and Gly-513 each coordinate UDP-alpha-D-glucose. Residue Thr-515 participates in UDP binding. Arg-582 and Arg-586 together coordinate alpha-D-glucose 6-phosphate. Residues 620-704 (KFHLEPTSPP…KKKLHGEYKN (85 aa)) form a disordered region. The residue at position 627 (Ser-627) is a Phosphoserine. Ser-641, Ser-645, Ser-649, and Ser-653 each carry phosphoserine; by GSK3-alpha and GSK3-beta. Residues 647 to 657 (SGSQASSPQCS) are compositionally biased toward low complexity. Residue Ser-657 is modified to Phosphoserine; by CK2. Residues 658–675 (DAEDEEDEDERYDEEEEA) show a composition bias toward acidic residues. A Phosphoserine modification is found at Ser-684.

The protein belongs to the glycosyltransferase 3 family. As to quaternary structure, part of the glycogen synthase (GS)-glycogenin complex, a heterooctamer composed of a tetramer of GS and 2 dimers of glycogenin, where each GS protomer binds to one glycogenin subunit (via glycogenin C-terminus); the GS tetramer may dissociate from glycogenin dimers to continue glycogen polymerization on its own. May also form a heterooctamer complex with GYG1 (via GYG1 C-terminus). Post-translationally, phosphorylation reduces the activity towards UDP-alpha-D-glucose. Primed phosphorylation at Ser-657 (site 5) by CSNK2A1 and CSNK2A2 is required for inhibitory phosphorylation at Ser-641 (site 3a), Ser-645 (site 3b), Ser-649 (site 3c) and Ser-653 (site 4) by GSK3A an GSK3B. Dephosphorylation at Ser-641 and Ser-645 by PP1 activates the enzyme. Phosphorylation at Ser-8 is not required for interaction with GYG1. Interaction with GYG1 does not regulate the phosphorylation at Ser-8 and Ser-641. Specifically expressed in liver.

The enzyme catalyses [(1-&gt;4)-alpha-D-glucosyl](n) + UDP-alpha-D-glucose = [(1-&gt;4)-alpha-D-glucosyl](n+1) + UDP + H(+). It participates in glycan biosynthesis; glycogen biosynthesis. Its activity is regulated as follows. Allosteric activation by glucose-6-phosphate. Phosphorylation reduces the activity towards UDP-glucose. When in the non-phosphorylated state, glycogen synthase does not require glucose-6-phosphate as an allosteric activator; when phosphorylated it does. Functionally, glycogen synthase participates in the glycogen biosynthetic process along with glycogenin and glycogen branching enzyme. Extends the primer composed of a few glucose units formed by glycogenin by adding new glucose units to it. In this context, glycogen synthase transfers the glycosyl residue from UDP-Glc to the non-reducing end of alpha-1,4-glucan. The protein is Glycogen [starch] synthase, liver of Mus musculus (Mouse).